The chain runs to 192 residues: Thymidylate kinase (192 aa).

7-14 serves as a coordination point for ATP; sequence GIDCVGKS.

Belongs to the thymidylate kinase family.

It catalyses the reaction dTMP + ATP = dTDP + ADP. Its function is as follows. Phosphorylation of dTMP to form dTDP in both de novo and salvage pathways of dTTP synthesis. This chain is Thymidylate kinase, found in Campylobacter jejuni subsp. jejuni serotype O:23/36 (strain 81-176).